The sequence spans 590 residues: Leucine-rich repeat transmembrane neuronal protein 4 (590 aa).

A signal peptide spans 1–30 (MGFHLITQLKGMSVVLVLLPTLLLVMLTGA). In terms of domain architecture, LRRNT spans 31–61 (QRACPKNCRCDGKIVYCESHAFADIPENISG). Residues 31 to 424 (QRACPKNCRC…QEYEHVSFHK (394 aa)) are Extracellular-facing. The N-linked (GlcNAc...) asparagine glycan is linked to Asn-58. LRR repeat units lie at residues 62–83 (GSQG…QFAG), 86–107 (QLIW…AFQG), 110–131 (RLKE…TFHP), 134–155 (NLRN…QFKG), 158–179 (KLII…VFQD), 182–203 (NLDF…AFAG), 206–226 (KLKE…AHFP), 230–251 (NLRS…LTWT), 254–275 (SLHN…TFKC), and 278–299 (NLQK…TVNA). A glycan (N-linked (GlcNAc...) asparagine) is linked at Asn-126. Asn-291 carries N-linked (GlcNAc...) asparagine glycosylation. One can recognise an LRRCT domain in the interval 311 to 362 (NMWECSRSICPLFYWLKNFKGNKESTMICAGPKHIQGEKVSDAVETYNICSE). The chain crosses the membrane as a helical span at residues 425–445 (IIAGSVALFLSVAMILLVIYV). Over 446–590 (SWKRYPASMK…PAIYLERIAN (145 aa)) the chain is Cytoplasmic.

The protein belongs to the LRRTM family. As to quaternary structure, peripherally associated with AMPAR complex. AMPAR complex consists of an inner core made of 4 pore-forming GluA/GRIA proteins (GRIA1, GRIA2, GRIA3 and GRIA4) and 4 major auxiliary subunits arranged in a twofold symmetry. One of the two pairs of distinct binding sites is occupied either by CNIH2, CNIH3 or CACNG2, CACNG3. The other harbors CACNG2, CACNG3, CACNG4, CACNG8 or GSG1L. This inner core of AMPAR complex is complemented by outer core constituents binding directly to the GluA/GRIA proteins at sites distinct from the interaction sites of the inner core constituents. Outer core constituents include at least PRRT1, PRRT2, CKAMP44/SHISA9, FRRS1L and NRN1. The proteins of the inner and outer core serve as a platform for other, more peripherally associated AMPAR constituents, including LRRTM4. Alone or in combination, these auxiliary subunits control the gating and pharmacology of the AMPAR complex and profoundly impact their biogenesis and protein processing. In terms of tissue distribution, expressed in neuronal tissues.

It localises to the cell membrane. The protein resides in the postsynaptic cell membrane. Its function is as follows. May play a role in the development and maintenance of the vertebrate nervous system. Exhibits strong synaptogenic activity, restricted to excitatory presynaptic differentiation. The sequence is that of Leucine-rich repeat transmembrane neuronal protein 4 (LRRTM4) from Homo sapiens (Human).